Reading from the N-terminus, the 590-residue chain is Aspartate--tRNA(Asp/Asn) ligase (590 aa).

Glu-176 provides a ligand contact to L-aspartate. Residues Gln-200–Lys-203 are aspartate. L-aspartate-binding residues include Arg-222 and His-451. Arg-222–Glu-224 contributes to the ATP binding site. Glu-485 provides a ligand contact to ATP. Residue Arg-492 participates in L-aspartate binding. ATP is bound at residue Gly-537–Arg-540.

The protein belongs to the class-II aminoacyl-tRNA synthetase family. Type 1 subfamily. In terms of assembly, homodimer.

It localises to the cytoplasm. It catalyses the reaction tRNA(Asx) + L-aspartate + ATP = L-aspartyl-tRNA(Asx) + AMP + diphosphate. Functionally, aspartyl-tRNA synthetase with relaxed tRNA specificity since it is able to aspartylate not only its cognate tRNA(Asp) but also tRNA(Asn). Reaction proceeds in two steps: L-aspartate is first activated by ATP to form Asp-AMP and then transferred to the acceptor end of tRNA(Asp/Asn). The protein is Aspartate--tRNA(Asp/Asn) ligase of Ehrlichia chaffeensis (strain ATCC CRL-10679 / Arkansas).